Consider the following 144-residue polypeptide: 3-dehydroquinate dehydratase (144 aa).

Y24 acts as the Proton acceptor in catalysis. Residues N76, H82, and D89 each contribute to the substrate site. The active-site Proton donor is the H102. Residues L103–S104 and R113 each bind substrate.

Belongs to the type-II 3-dehydroquinase family. Homododecamer.

It catalyses the reaction 3-dehydroquinate = 3-dehydroshikimate + H2O. The protein operates within metabolic intermediate biosynthesis; chorismate biosynthesis; chorismate from D-erythrose 4-phosphate and phosphoenolpyruvate: step 3/7. In terms of biological role, catalyzes a trans-dehydration via an enolate intermediate. This chain is 3-dehydroquinate dehydratase, found in Bordetella bronchiseptica (strain ATCC BAA-588 / NCTC 13252 / RB50) (Alcaligenes bronchisepticus).